The following is a 168-amino-acid chain: uncharacterized protein (168 aa).

Positions 1-15 (MKRIISSSKSLKQLS) are enriched in low complexity. A disordered region spans residues 1–107 (MKRIISSSKS…NNNNNNNNNN (107 aa)). The span at 33 to 47 (SDSDSDSDSDSDSDS) shows a compositional bias: acidic residues. The segment covering 48 to 107 (DSNSNSNSNSNSNSNSNSNSNSNSNSNNNNNNTNNNNNNNNNNNNNNNNNNNNNNNNNNN) has biased composition (low complexity).

This is an uncharacterized protein from Dictyostelium discoideum (Social amoeba).